We begin with the raw amino-acid sequence, 85 residues long: Small ribosomal subunit protein uS17 (85 aa).

Belongs to the universal ribosomal protein uS17 family. As to quaternary structure, part of the 30S ribosomal subunit.

One of the primary rRNA binding proteins, it binds specifically to the 5'-end of 16S ribosomal RNA. This Mesoplasma florum (strain ATCC 33453 / NBRC 100688 / NCTC 11704 / L1) (Acholeplasma florum) protein is Small ribosomal subunit protein uS17.